Here is a 987-residue protein sequence, read N- to C-terminus: UPF0182 protein DIP0733 (987 aa).

7 helical membrane passes run 19–39, 63–83, 115–135, 176–196, 212–234, 261–281, and 290–310; these read LTWL…VVDL, IGLF…AGWF, FLVV…QQAW, SVLL…LGGI, YAKV…SYWL, AKIV…SVIV, and ISTV…PIMM. A compositionally biased stretch (basic and acidic residues) spans 904–927; sequence DLGEAKGLKPESQNRDKPEDKEGK. Residues 904–950 are disordered; it reads DLGEAKGLKPESQNRDKPEDKEGKAPSTPSAPASGSGTTGEAIGKIN. Residues 928–943 show a composition bias toward low complexity; it reads APSTPSAPASGSGTTG.

Belongs to the UPF0182 family.

The protein localises to the cell membrane. This is UPF0182 protein DIP0733 from Corynebacterium diphtheriae (strain ATCC 700971 / NCTC 13129 / Biotype gravis).